The chain runs to 224 residues: Large ribosomal subunit protein uL3 (224 aa).

Gln159 is modified (N5-methylglutamine).

It belongs to the universal ribosomal protein uL3 family. As to quaternary structure, part of the 50S ribosomal subunit. Forms a cluster with proteins L14 and L19. Post-translationally, methylated by PrmB.

Functionally, one of the primary rRNA binding proteins, it binds directly near the 3'-end of the 23S rRNA, where it nucleates assembly of the 50S subunit. This is Large ribosomal subunit protein uL3 from Janthinobacterium sp. (strain Marseille) (Minibacterium massiliensis).